Here is a 664-residue protein sequence, read N- to C-terminus: DNA ligase (664 aa).

NAD(+) contacts are provided by residues 32–36 (DKEYD) and 80–81 (SL). The active-site N6-AMP-lysine intermediate is the Lys-122. NAD(+)-binding residues include Arg-144, Glu-178, and Lys-314. Zn(2+) contacts are provided by Cys-407, Cys-410, Cys-423, and Cys-429. The 78-residue stretch at 587-664 (IDENPFMDKT…NEEEFSNKIK (78 aa)) folds into the BRCT domain.

Belongs to the NAD-dependent DNA ligase family. LigA subfamily. It depends on Mg(2+) as a cofactor. Mn(2+) serves as cofactor.

It carries out the reaction NAD(+) + (deoxyribonucleotide)n-3'-hydroxyl + 5'-phospho-(deoxyribonucleotide)m = (deoxyribonucleotide)n+m + AMP + beta-nicotinamide D-nucleotide.. In terms of biological role, DNA ligase that catalyzes the formation of phosphodiester linkages between 5'-phosphoryl and 3'-hydroxyl groups in double-stranded DNA using NAD as a coenzyme and as the energy source for the reaction. It is essential for DNA replication and repair of damaged DNA. The chain is DNA ligase from Clostridium botulinum (strain Langeland / NCTC 10281 / Type F).